The sequence spans 639 residues: Chaperone protein DnaK (639 aa).

Thr196 carries the post-translational modification Phosphothreonine; by autocatalysis. The segment at 592–639 (ASSLYQTPDAGAPGASGPSAGGEPETGKKGGDGEVQNAEYEVIDGNDK) is disordered. Positions 601 to 613 (AGAPGASGPSAGG) are enriched in low complexity.

It belongs to the heat shock protein 70 family.

Its function is as follows. Acts as a chaperone. This Chlorobium limicola (strain DSM 245 / NBRC 103803 / 6330) protein is Chaperone protein DnaK.